The chain runs to 374 residues: UPF0674 endoplasmic reticulum membrane protein C2G5.01 (374 aa).

The chain crosses the membrane as a helical span at residues 49–68; sequence FRLEFVILACFFLYVFSFIT. N-linked (GlcNAc...) asparagine glycosylation occurs at Asn287. The tract at residues 335-374 is disordered; sequence KAAKKKVKSSGDISKLSESDQKKRMERERQRKMRRRAKKM. Residues 349–363 are compositionally biased toward basic and acidic residues; sequence KLSESDQKKRMERER. Positions 364 to 374 are enriched in basic residues; the sequence is QRKMRRRAKKM.

This sequence belongs to the UPF0674 family.

The protein localises to the endoplasmic reticulum membrane. This chain is UPF0674 endoplasmic reticulum membrane protein C2G5.01, found in Schizosaccharomyces pombe (strain 972 / ATCC 24843) (Fission yeast).